A 556-amino-acid chain; its full sequence is 2-succinyl-5-enolpyruvyl-6-hydroxy-3-cyclohexene-1-carboxylate synthase (556 aa).

It belongs to the TPP enzyme family. MenD subfamily. As to quaternary structure, homodimer. Requires Mg(2+) as cofactor. The cofactor is Mn(2+). Thiamine diphosphate serves as cofactor.

It carries out the reaction isochorismate + 2-oxoglutarate + H(+) = 5-enolpyruvoyl-6-hydroxy-2-succinyl-cyclohex-3-ene-1-carboxylate + CO2. The protein operates within quinol/quinone metabolism; 1,4-dihydroxy-2-naphthoate biosynthesis; 1,4-dihydroxy-2-naphthoate from chorismate: step 2/7. It functions in the pathway quinol/quinone metabolism; menaquinone biosynthesis. In terms of biological role, catalyzes the thiamine diphosphate-dependent decarboxylation of 2-oxoglutarate and the subsequent addition of the resulting succinic semialdehyde-thiamine pyrophosphate anion to isochorismate to yield 2-succinyl-5-enolpyruvyl-6-hydroxy-3-cyclohexene-1-carboxylate (SEPHCHC). The polypeptide is 2-succinyl-5-enolpyruvyl-6-hydroxy-3-cyclohexene-1-carboxylate synthase (Salmonella arizonae (strain ATCC BAA-731 / CDC346-86 / RSK2980)).